Reading from the N-terminus, the 252-residue chain is Chitooligosaccharide deacetylase (252 aa).

His61 and His125 together coordinate Mg(2+).

It belongs to the YdjC deacetylase family. ChbG subfamily. In terms of assembly, homodimer. Requires Mg(2+) as cofactor.

It is found in the cytoplasm. It carries out the reaction N,N'-diacetylchitobiose + H2O = N-acetyl-beta-D-glucosaminyl-(1-&gt;4)-D-glucosamine + acetate. The catalysed reaction is diacetylchitobiose-6'-phosphate + H2O = N'-monoacetylchitobiose-6'-phosphate + acetate. Its pathway is glycan degradation; chitin degradation. Its function is as follows. Involved in the degradation of chitin. ChbG is essential for growth on the acetylated chitooligosaccharides chitobiose and chitotriose but is dispensable for growth on cellobiose and chitosan dimer, the deacetylated form of chitobiose. Deacetylation of chitobiose-6-P and chitotriose-6-P is necessary for both the activation of the chb promoter by the regulatory protein ChbR and the hydrolysis of phosphorylated beta-glucosides by the phospho-beta-glucosidase ChbF. Catalyzes the removal of only one acetyl group from chitobiose-6-P to yield monoacetylchitobiose-6-P, the inducer of ChbR and the substrate of ChbF. The chain is Chitooligosaccharide deacetylase from Salmonella dublin (strain CT_02021853).